A 359-amino-acid polypeptide reads, in one-letter code: MAVVAGLVRGPLRQASGLLKRRFHRSAPAAVQLTVREAINQGMDEELERDEKVFLLGEEVAQYDGAYKVSRGLWKKYGDKRIIDTPISEMGFAGIAVGAAMAGLRPICEFMTFNFSMQAIDQVINSAAKTYYMSAGLQPVPIVFRGPNGASAGVAAQHSQCFAAWYGHCPGLKVVSPWNSEDAKGLIKSAIRDNNPVVMLENELMYGVAFELPAEAQSKDFLIPIGKAKIERQGTHITVVAHSRPVGHCLEAAAVLSKEGIECEVINLRTIRPMDIEAIEASVMKTNHLVTVEGGWPQFGVGAEICARIMEGPAFNFLDAPAVRVTGADVPMPYAKVLEDNSVPQVKDIIFAVKKTLNI.

The transit peptide at 1 to 30 directs the protein to the mitochondrion; the sequence is MAVVAGLVRGPLRQASGLLKRRFHRSAPAA. Y67 is subject to Phosphotyrosine. Residue E89 coordinates thiamine diphosphate. 5 residues coordinate K(+): I142, A190, I191, D193, and N195. K354 is modified (N6-acetyllysine).

As to quaternary structure, heterotetramer of two PDHA1 and two PDHB subunits. The heterotetramer interacts with DLAT, and is part of the multimeric pyruvate dehydrogenase complex that contains multiple copies of pyruvate dehydrogenase (E1), dihydrolipoamide acetyltransferase (DLAT, E2) and lipoamide dehydrogenase (DLD, E3). These subunits are bound to an inner core composed of about 48 DLAT and 12 PDHX molecules. Interacts with DLAT. Thiamine diphosphate is required as a cofactor.

Its subcellular location is the mitochondrion matrix. It carries out the reaction N(6)-[(R)-lipoyl]-L-lysyl-[protein] + pyruvate + H(+) = N(6)-[(R)-S(8)-acetyldihydrolipoyl]-L-lysyl-[protein] + CO2. Functionally, the pyruvate dehydrogenase complex catalyzes the overall conversion of pyruvate to acetyl-CoA and CO(2), and thereby links the glycolytic pathway to the tricarboxylic cycle. This chain is Pyruvate dehydrogenase E1 component subunit beta, mitochondrial (Pdhb), found in Mus musculus (Mouse).